A 614-amino-acid polypeptide reads, in one-letter code: Dihydroxy-acid dehydratase (614 aa).

Residue aspartate 81 coordinates Mg(2+). Position 122 (cysteine 122) interacts with [2Fe-2S] cluster. Mg(2+)-binding residues include aspartate 123 and lysine 124. Lysine 124 carries the N6-carboxylysine modification. Cysteine 193 is a binding site for [2Fe-2S] cluster. Glutamate 489 lines the Mg(2+) pocket. Residue serine 515 is the Proton acceptor of the active site.

It belongs to the IlvD/Edd family. As to quaternary structure, homodimer. Requires [2Fe-2S] cluster as cofactor. It depends on Mg(2+) as a cofactor.

It carries out the reaction (2R)-2,3-dihydroxy-3-methylbutanoate = 3-methyl-2-oxobutanoate + H2O. The catalysed reaction is (2R,3R)-2,3-dihydroxy-3-methylpentanoate = (S)-3-methyl-2-oxopentanoate + H2O. It participates in amino-acid biosynthesis; L-isoleucine biosynthesis; L-isoleucine from 2-oxobutanoate: step 3/4. It functions in the pathway amino-acid biosynthesis; L-valine biosynthesis; L-valine from pyruvate: step 3/4. Functionally, functions in the biosynthesis of branched-chain amino acids. Catalyzes the dehydration of (2R,3R)-2,3-dihydroxy-3-methylpentanoate (2,3-dihydroxy-3-methylvalerate) into 2-oxo-3-methylpentanoate (2-oxo-3-methylvalerate) and of (2R)-2,3-dihydroxy-3-methylbutanoate (2,3-dihydroxyisovalerate) into 2-oxo-3-methylbutanoate (2-oxoisovalerate), the penultimate precursor to L-isoleucine and L-valine, respectively. In Marinomonas sp. (strain MWYL1), this protein is Dihydroxy-acid dehydratase.